Consider the following 397-residue polypeptide: S-adenosylmethionine synthase (397 aa).

His-16 lines the ATP pocket. Mg(2+) is bound at residue Asp-18. Glu-44 provides a ligand contact to K(+). L-methionine contacts are provided by Glu-57 and Gln-100. A flexible loop region spans residues 100-110 (QSPDIAQGVDN). ATP contacts are provided by residues 175–177 (DGK), 242–243 (RF), Asp-251, 257–258 (RK), Ala-274, and Lys-278. Residue Asp-251 coordinates L-methionine. Residue Lys-282 participates in L-methionine binding.

The protein belongs to the AdoMet synthase family. As to quaternary structure, homotetramer; dimer of dimers. Requires Mg(2+) as cofactor. The cofactor is K(+).

It is found in the cytoplasm. The catalysed reaction is L-methionine + ATP + H2O = S-adenosyl-L-methionine + phosphate + diphosphate. It functions in the pathway amino-acid biosynthesis; S-adenosyl-L-methionine biosynthesis; S-adenosyl-L-methionine from L-methionine: step 1/1. Catalyzes the formation of S-adenosylmethionine (AdoMet) from methionine and ATP. The overall synthetic reaction is composed of two sequential steps, AdoMet formation and the subsequent tripolyphosphate hydrolysis which occurs prior to release of AdoMet from the enzyme. The polypeptide is S-adenosylmethionine synthase (Leifsonia xyli subsp. xyli (strain CTCB07)).